The sequence spans 171 residues: MSTEQELQIGKVVKSHGIRGEVVVELSTDDPDIRFAIGEVLNGKQAGKEHSLTIDAARMHQGRLLVKFAEVPDRTAADSLRGTRFFAAPLEDEDDEDGFYDHELEGLRVIHEGEDIGEVTGVMHGPAGEILEVRLTSGKETLIPFVHAIVPEVDLEEGTATITPPEGLLDL.

In terms of domain architecture, PRC barrel spans 96 to 168 (EDGFYDHELE…TATITPPEGL (73 aa)).

Belongs to the RimM family. Binds ribosomal protein uS19.

It localises to the cytoplasm. Its function is as follows. An accessory protein needed during the final step in the assembly of 30S ribosomal subunit, possibly for assembly of the head region. Essential for efficient processing of 16S rRNA. May be needed both before and after RbfA during the maturation of 16S rRNA. It has affinity for free ribosomal 30S subunits but not for 70S ribosomes. The polypeptide is Ribosome maturation factor RimM (Corynebacterium glutamicum (strain ATCC 13032 / DSM 20300 / JCM 1318 / BCRC 11384 / CCUG 27702 / LMG 3730 / NBRC 12168 / NCIMB 10025 / NRRL B-2784 / 534)).